Reading from the N-terminus, the 544-residue chain is Protein angel homolog 2 (544 aa).

It belongs to the CCR4/nocturin family.

The chain is Protein angel homolog 2 (ANGEL2) from Bos taurus (Bovine).